The sequence spans 303 residues: MGLLEGTFLDWEYESYPSYEDFAVLPLFALFFPSVRFLLDRFVFEKVARRLIFGKGQEVVENETDDRRRRIRKFKESAWKCIYFLSAEVFALVVTYNEPWFTNTRYFWVGPGDQVWPDQMYKSKLKALYMYTGGFYTYSIFALIFWETRRSDFGVSMSHHVATAILIVLSYNIRFARVGSVVLAIHDASDIFLEIGKMSKYSGAEALASFRYLCLSWIILRLIYYPFWVLWSTSYEVLQTLDKEKHKVDGPIYYYIFNSLLFCLLVLHIYWWVLIYRMLVKQIQARGQLSDDVRSDSEDEHED.

6 consecutive transmembrane segments (helical) span residues 19–39 (YEDF…RFLL), 81–101 (CIYF…EPWF), 127–147 (ALYM…IFWE), 153–173 (FGVS…SYNI), 212–232 (YLCL…VLWS), and 255–275 (YIFN…WVLI). The 213-residue stretch at 72–284 (RKFKESAWKC…IYRMLVKQIQ (213 aa)) folds into the TLC domain.

It localises to the endoplasmic reticulum membrane. Functionally, mediates resistance to sphinganine-analog mycotoxins (SAMs) by restoring the sphingolipid biosynthesis. Could salvage the transport of GPI-anchored proteins from the endoplasmic reticulum to the Golgi apparatus in ceramides-depleted cells after SAM exposure. The polypeptide is ASC1-like protein (Solanum lycopersicum (Tomato)).